Consider the following 440-residue polypeptide: Chromosome partition protein MukF (440 aa).

A leucine-zipper region spans residues 208-236 (LSETSGTLRELQDTLEAAGDKLQANLLRI).

This sequence belongs to the MukF family. Interacts, and probably forms a ternary complex, with MukE and MukB via its C-terminal region. The complex formation is stimulated by calcium or magnesium. It is required for an interaction between MukE and MukB.

The protein localises to the cytoplasm. The protein resides in the nucleoid. Involved in chromosome condensation, segregation and cell cycle progression. May participate in facilitating chromosome segregation by condensation DNA from both sides of a centrally located replisome during cell division. Not required for mini-F plasmid partitioning. Probably acts via its interaction with MukB and MukE. Overexpression results in anucleate cells. It has a calcium binding activity. The chain is Chromosome partition protein MukF from Escherichia coli O157:H7.